The chain runs to 133 residues: Helix-loop-helix protein 1 (133 aa).

The tract at residues M1–A79 is disordered. Over residues D25–A45 the composition is skewed to gly residues. Residues E52–E65 are compositionally biased toward basic and acidic residues. Over residues R66–A79 the composition is skewed to basic residues. The region spanning K75–L127 is the bHLH domain.

In terms of assembly, efficient DNA binding requires dimerization with another bHLH protein.

Its subcellular location is the nucleus. Functionally, may serve as DNA-binding protein and may be involved in the control of cell-type determination, possibly within the developing nervous system. In Homo sapiens (Human), this protein is Helix-loop-helix protein 1 (NHLH1).